The sequence spans 67 residues: Large ribosomal subunit protein eL24 (67 aa).

Residues C7, C10, C33, and C37 each contribute to the Zn(2+) site. A C4-type zinc finger spans residues 7-37; sequence CDYCGTDIEPGTGTMFVHKDGATTHFCSSKC. The segment covering 48-60 has biased composition (basic and acidic residues); that stretch reads RNLEWTDTARGEA. The disordered stretch occupies residues 48 to 67; it reads RNLEWTDTARGEAGEAEDEA.

It belongs to the eukaryotic ribosomal protein eL24 family. Part of the 50S ribosomal subunit. Forms a cluster with proteins L3 and L14. Zn(2+) serves as cofactor.

In terms of biological role, binds to the 23S rRNA. The chain is Large ribosomal subunit protein eL24 (rpl24e) from Haloarcula marismortui (strain ATCC 43049 / DSM 3752 / JCM 8966 / VKM B-1809) (Halobacterium marismortui).